Consider the following 486-residue polypeptide: N-succinylglutamate 5-semialdehyde dehydrogenase (486 aa).

Position 220-225 (220-225 (GSSRTG)) interacts with NAD(+). Residues glutamate 243 and cysteine 277 contribute to the active site.

The protein belongs to the aldehyde dehydrogenase family. AstD subfamily.

It carries out the reaction N-succinyl-L-glutamate 5-semialdehyde + NAD(+) + H2O = N-succinyl-L-glutamate + NADH + 2 H(+). Its pathway is amino-acid degradation; L-arginine degradation via AST pathway; L-glutamate and succinate from L-arginine: step 4/5. Functionally, catalyzes the NAD-dependent reduction of succinylglutamate semialdehyde into succinylglutamate. The sequence is that of N-succinylglutamate 5-semialdehyde dehydrogenase from Shewanella baltica (strain OS185).